The following is a 456-amino-acid chain: MNTMTLLGKVFLLQFLIGVGFCMLMQDPKRNDTKGTYAACFRSQPQGNEPASPDCLKAFMAYAEDMKNIFHFTKEQINYLWSLERETQSLLHNHRRRKRQAVYLPVRKECRLLSELERQNLFYTVRSLKMDTSNPNEYDTLANLHRGAVQPHAHDGSNFLGWHRVYLMYYERALRRIRGDVTLCFWDTTMEFNLGMDNWEYTAVFSSDFFGNRRGQVITGPFRDWPLPPGLTESDYLYRNMTRGRGMPFDSRAASSIFYNPNTIIHSTITWEGFGFDTITNSQGQTRNITIEGEHNNVHNWVGGAMGFLDPAPQDPIFFFHHCYIDYVWERFREKMRRYFRDPTTDYPGHGNETLHDANYPMIGFEWYRNIDGYSDYFTQNVYRYESPTCQACYYSPYTVCGQGNQCIARMNYPGTEIEEGPQVPNGPVAAFSVAGGTMMMSASNGRGFIATSNSE.

An N-terminal signal peptide occupies residues 1–22; that stretch reads MNTMTLLGKVFLLQFLIGVGFC. Cu cation-binding residues include His-145, His-154, His-163, His-295, His-299, and His-322.

Belongs to the tyrosinase family. The cofactor is Cu(2+). In terms of tissue distribution, prismatic layer of shell (at protein level).

Its subcellular location is the secreted. This chain is Tyrosinase-like protein, found in Pinctada maxima (Silver-lipped pearl oyster).